A 545-amino-acid chain; its full sequence is CTP synthase (545 aa).

An amidoligase domain region spans residues 1–266 (MTTNYIFVTG…DDYICKRFSL (266 aa)). Serine 14 contacts CTP. Serine 14 contacts UTP. Residues 15–20 (SLGKGI) and aspartate 72 contribute to the ATP site. Residues aspartate 72 and glutamate 140 each contribute to the Mg(2+) site. CTP is bound by residues 147–149 (DIE), 187–192 (KTKPTQ), and lysine 223. UTP contacts are provided by residues 187-192 (KTKPTQ) and lysine 223. Position 239–241 (239–241 (KDV)) interacts with ATP. Positions 291–542 (TIGMVGKYIE…VKAASEYQKR (252 aa)) constitute a Glutamine amidotransferase type-1 domain. Glycine 352 is a binding site for L-glutamine. Cysteine 379 functions as the Nucleophile; for glutamine hydrolysis in the catalytic mechanism. L-glutamine contacts are provided by residues 380-383 (LGMQ), glutamate 403, and arginine 470. Active-site residues include histidine 515 and glutamate 517.

The protein belongs to the CTP synthase family. Homotetramer.

The catalysed reaction is UTP + L-glutamine + ATP + H2O = CTP + L-glutamate + ADP + phosphate + 2 H(+). The enzyme catalyses L-glutamine + H2O = L-glutamate + NH4(+). It catalyses the reaction UTP + NH4(+) + ATP = CTP + ADP + phosphate + 2 H(+). The protein operates within pyrimidine metabolism; CTP biosynthesis via de novo pathway; CTP from UDP: step 2/2. Allosterically activated by GTP, when glutamine is the substrate; GTP has no effect on the reaction when ammonia is the substrate. The allosteric effector GTP functions by stabilizing the protein conformation that binds the tetrahedral intermediate(s) formed during glutamine hydrolysis. Inhibited by the product CTP, via allosteric rather than competitive inhibition. In terms of biological role, catalyzes the ATP-dependent amination of UTP to CTP with either L-glutamine or ammonia as the source of nitrogen. Regulates intracellular CTP levels through interactions with the four ribonucleotide triphosphates. This Klebsiella pneumoniae (strain 342) protein is CTP synthase.